Reading from the N-terminus, the 373-residue chain is Glutamate 5-kinase (373 aa).

Lys-16 is a binding site for ATP. Residues Ser-56, Asp-143, and Asn-155 each coordinate substrate. 175–176 (TD) contacts ATP. A PUA domain is found at 281–359 (RGRLTLDDGA…SRIDSLLGYK (79 aa)).

It belongs to the glutamate 5-kinase family.

Its subcellular location is the cytoplasm. It carries out the reaction L-glutamate + ATP = L-glutamyl 5-phosphate + ADP. It functions in the pathway amino-acid biosynthesis; L-proline biosynthesis; L-glutamate 5-semialdehyde from L-glutamate: step 1/2. Its function is as follows. Catalyzes the transfer of a phosphate group to glutamate to form L-glutamate 5-phosphate. In Saccharophagus degradans (strain 2-40 / ATCC 43961 / DSM 17024), this protein is Glutamate 5-kinase.